Reading from the N-terminus, the 545-residue chain is Glucose starvation modulator protein 1 (545 aa).

Positions 20-48 (CGFCHEKHLQCDVGRPCQNCRKRNIASFC) form a DNA-binding region, zn(2)-C6 fungal-type. Residues 51–60 (KVKRRRKRKR) are compositionally biased toward basic residues. Disordered regions lie at residues 51 to 131 (KVKR…AMKD) and 228 to 270 (YISL…WQQQ). Over residues 61–71 (SDASNFDKDEA) the composition is skewed to basic and acidic residues. Polar residues predominate over residues 72–92 (ATQTLNFNTVNPGEGSSSAMT). The span at 98 to 110 (TGTTTATTTRTTT) shows a compositional bias: low complexity. The span at 111–125 (NFRSESKASSSTENI) shows a compositional bias: polar residues. Over residues 257 to 270 (QQKESQQMQLWQQQ) the composition is skewed to low complexity. The region spanning 416-486 (ELENMSKLVN…DLFHEHLAFG (71 aa)) is the PAS domain.

Belongs to the ERT1/acuK family.

The protein resides in the nucleus. Its function is as follows. Transcription factor which regulates nonfermentable carbon utilization. This is Glucose starvation modulator protein 1 (GSM1) from Zygosaccharomyces rouxii (strain ATCC 2623 / CBS 732 / NBRC 1130 / NCYC 568 / NRRL Y-229).